The sequence spans 182 residues: Protein SrpB (182 aa).

4 helical membrane passes run 11-31 (WLGL…IGLN), 43-63 (TFTL…QAEG), 73-93 (LSRT…GLIL), and 116-136 (IWIT…LGLI).

The protein belongs to the MgtC/SapB family.

The protein localises to the cell membrane. This Synechococcus elongatus (strain ATCC 33912 / PCC 7942 / FACHB-805) (Anacystis nidulans R2) protein is Protein SrpB (srpB).